The sequence spans 144 residues: D-aminoacyl-tRNA deacylase (144 aa).

The Gly-cisPro motif, important for rejection of L-amino acids signature appears at 136–137 (GP).

It belongs to the DTD family. Homodimer.

The protein localises to the cytoplasm. It carries out the reaction glycyl-tRNA(Ala) + H2O = tRNA(Ala) + glycine + H(+). The catalysed reaction is a D-aminoacyl-tRNA + H2O = a tRNA + a D-alpha-amino acid + H(+). In terms of biological role, an aminoacyl-tRNA editing enzyme that deacylates mischarged D-aminoacyl-tRNAs. Also deacylates mischarged glycyl-tRNA(Ala), protecting cells against glycine mischarging by AlaRS. Acts via tRNA-based rather than protein-based catalysis; rejects L-amino acids rather than detecting D-amino acids in the active site. By recycling D-aminoacyl-tRNA to D-amino acids and free tRNA molecules, this enzyme counteracts the toxicity associated with the formation of D-aminoacyl-tRNA entities in vivo and helps enforce protein L-homochirality. This Aliivibrio salmonicida (strain LFI1238) (Vibrio salmonicida (strain LFI1238)) protein is D-aminoacyl-tRNA deacylase.